A 2389-amino-acid chain; its full sequence is Highly reducing polyketide synthase Dhc3 (2389 aa).

Positions 9 to 433 (DVPIAVVGLA…GTNGHAVLES (425 aa)) constitute a Ketosynthase family 3 (KS3) domain. Active-site for beta-ketoacyl synthase activity residues include C181, H316, and H356. The malonyl-CoA:ACP transacylase (MAT) domain stretch occupies residues 551–861 (FVFTGQGAQW…LSGPVEQILN (311 aa)). The For malonyltransferase activity role is filled by S641. Positions 944 to 1079 (RSLIGAQVPM…GLITIDYADT (136 aa)) are N-terminal hotdog fold. The 320-residue stretch at 944-1263 (RSLIGAQVPM…VSELENDTEA (320 aa)) folds into the PKS/mFAS DH domain. A dehydratase (DH) domain region spans residues 946–1262 (LIGAQVPMMD…RVSELENDTE (317 aa)). The Proton acceptor; for dehydratase activity role is filled by H976. The interval 1107-1263 (PDICSKEDFY…VSELENDTEA (157 aa)) is C-terminal hotdog fold. The active-site Proton donor; for dehydratase activity is the D1173. The segment at 1673–1987 (GLLDTLAFIE…QGKHRGKLVL (315 aa)) is enoylreductase (ER) domain. A catalytic ketoreductase (KRc) domain region spans residues 2011 to 2191 (ATYLFVGGLG…VAVDLGIMRD (181 aa)). Residues 2302–2379 (EAVSIITDAL…EFAEKIAEKS (78 aa)) enclose the Carrier domain. The residue at position 2339 (S2339) is an O-(pantetheine 4'-phosphoryl)serine.

It participates in mycotoxin biosynthesis. Functionally, highly reducing polyketide synthase; part of the gene cluster that mediates the biosynthesis of 10,11-dehydrocurvularin, a prevalent fungal phytotoxin with heat shock response and immune-modulatory activities. The highly reducing polyketide synthase Dhc3 is responsible for biosynthesis up to the tetraketide stage. The non-reducing polyketide synthase Dhc5 then conducts four additional chain extension cycles, producing the unreduced part of the nascent octaketide from C-1 to C-8 in 10,11-dehydrocurvularin. This chain is Highly reducing polyketide synthase Dhc3 (Dhc3), found in Alternaria cinerariae.